Reading from the N-terminus, the 232-residue chain is Small ribosomal subunit protein uS2 (232 aa).

The protein belongs to the universal ribosomal protein uS2 family.

The chain is Small ribosomal subunit protein uS2 from Pelotomaculum thermopropionicum (strain DSM 13744 / JCM 10971 / SI).